We begin with the raw amino-acid sequence, 413 residues long: Aspartate aminotransferase, cytoplasmic (413 aa).

L-aspartate is bound by residues Gly-39 and Trp-141. Ser-149 is modified (phosphoserine). Residue Asn-195 participates in L-aspartate binding. At Lys-259 the chain carries N6-(pyridoxal phosphate)lysine. Position 387 (Arg-387) interacts with L-aspartate.

Belongs to the class-I pyridoxal-phosphate-dependent aminotransferase family. As to quaternary structure, homodimer. It depends on pyridoxal 5'-phosphate as a cofactor.

The protein localises to the cytoplasm. The enzyme catalyses L-aspartate + 2-oxoglutarate = oxaloacetate + L-glutamate. It catalyses the reaction L-cysteine + 2-oxoglutarate = 2-oxo-3-sulfanylpropanoate + L-glutamate. It carries out the reaction (2S)-2-aminobutanoate + 2-oxoglutarate = 2-oxobutanoate + L-glutamate. The catalysed reaction is 3-sulfino-L-alanine + 2-oxoglutarate = 3-sulfinopyruvate + L-glutamate. Its function is as follows. Biosynthesis of L-glutamate from L-aspartate or L-cysteine. Important regulator of levels of glutamate, the major excitatory neurotransmitter of the vertebrate central nervous system. Acts as a scavenger of glutamate in brain neuroprotection. The aspartate aminotransferase activity is involved in hepatic glucose synthesis during development and in adipocyte glyceroneogenesis. Using L-cysteine as substrate, regulates levels of mercaptopyruvate, an important source of hydrogen sulfide. Mercaptopyruvate is converted into H(2)S via the action of 3-mercaptopyruvate sulfurtransferase (3MST). Hydrogen sulfide is an important synaptic modulator and neuroprotectant in the brain. This is Aspartate aminotransferase, cytoplasmic from Macaca fascicularis (Crab-eating macaque).